The following is a 264-amino-acid chain: Endochitinase At2g43590 (264 aa).

The signal sequence occupies residues 1-24 (MAFTKISLVLLLCLLGFFSETVKS). Residues 25-59 (QNCGCAPNLCCSQFGYCGTDDAYCGVGCRSGPCRG) form the Chitin-binding type-1 domain. Disulfide bonds link Cys-27–Cys-35, Cys-29–Cys-41, Cys-34–Cys-48, and Cys-52–Cys-57. The catalytic stretch occupies residues 66–264 (GSVGSIVTQG…GVDPGPNLSC (199 aa)). The active-site Proton donor is the Glu-128. N-linked (GlcNAc...) asparagine glycosylation occurs at Asn-261.

This sequence belongs to the glycosyl hydrolase 19 family. Chitinase class I subfamily.

It carries out the reaction Random endo-hydrolysis of N-acetyl-beta-D-glucosaminide (1-&gt;4)-beta-linkages in chitin and chitodextrins.. This Arabidopsis thaliana (Mouse-ear cress) protein is Endochitinase At2g43590.